The following is a 280-amino-acid chain: RAD52 motif-containing protein 1 (280 aa).

The RRM domain maps to 18–101 (KTIFIWDIQP…SPLKVRLSTK (84 aa)).

In terms of assembly, homodimer.

The protein localises to the nucleus. It localises to the cytoplasm. It is found in the nucleolus. May confer resistance to the antitumor agent cisplatin. Binds to DNA and RNA. The sequence is that of RAD52 motif-containing protein 1 (rdm1) from Danio rerio (Zebrafish).